Here is a 347-residue protein sequence, read N- to C-terminus: Dihydroorotase (347 aa).

Positions 13 and 15 each coordinate Zn(2+). Substrate is bound by residues 15 to 17 (HLR) and Asn41. 3 residues coordinate Zn(2+): Lys99, His136, and His174. Lys99 bears the N6-carboxylysine mark. Position 136 (His136) interacts with substrate. Leu219 is a substrate binding site. Asp247 contacts Zn(2+). Asp247 is a catalytic residue. Residues His251 and Ala263 each contribute to the substrate site.

It belongs to the metallo-dependent hydrolases superfamily. DHOase family. Class II DHOase subfamily. Homodimer. It depends on Zn(2+) as a cofactor.

It carries out the reaction (S)-dihydroorotate + H2O = N-carbamoyl-L-aspartate + H(+). It participates in pyrimidine metabolism; UMP biosynthesis via de novo pathway; (S)-dihydroorotate from bicarbonate: step 3/3. Its function is as follows. Catalyzes the reversible cyclization of carbamoyl aspartate to dihydroorotate. This chain is Dihydroorotase, found in Sinorhizobium medicae (strain WSM419) (Ensifer medicae).